The chain runs to 388 residues: Chorismate synthase (388 aa).

NADP(+)-binding residues include R39 and R45. FMN is bound by residues 130 to 132 (RSS), 251 to 252 (NA), A296, 311 to 315 (KPIPT), and R337.

The protein belongs to the chorismate synthase family. Homotetramer. FMNH2 is required as a cofactor.

The catalysed reaction is 5-O-(1-carboxyvinyl)-3-phosphoshikimate = chorismate + phosphate. It functions in the pathway metabolic intermediate biosynthesis; chorismate biosynthesis; chorismate from D-erythrose 4-phosphate and phosphoenolpyruvate: step 7/7. In terms of biological role, catalyzes the anti-1,4-elimination of the C-3 phosphate and the C-6 proR hydrogen from 5-enolpyruvylshikimate-3-phosphate (EPSP) to yield chorismate, which is the branch point compound that serves as the starting substrate for the three terminal pathways of aromatic amino acid biosynthesis. This reaction introduces a second double bond into the aromatic ring system. This Streptococcus equi subsp. zooepidemicus (strain H70) protein is Chorismate synthase.